Here is a 58-residue protein sequence, read N- to C-terminus: Large ribosomal subunit protein bL32 (58 aa).

The span at 1–19 (MAVPKRKTSKSNTKMRRAA) shows a compositional bias: basic residues. The interval 1 to 22 (MAVPKRKTSKSNTKMRRAANSK) is disordered.

The protein belongs to the bacterial ribosomal protein bL32 family.

This Clostridioides difficile (strain 630) (Peptoclostridium difficile) protein is Large ribosomal subunit protein bL32.